The following is a 474-amino-acid chain: GTPase Der (474 aa).

EngA-type G domains lie at Leu2 to Glu166 and Leu212 to Ser385. GTP contacts are provided by residues Gly8–Ser15, Asp55–Val59, Asn118–Asp121, Gly218–Ser225, Asp265–Leu269, and Asn330–Asp333. Positions Ser386–Thr470 constitute a KH-like domain.

It belongs to the TRAFAC class TrmE-Era-EngA-EngB-Septin-like GTPase superfamily. EngA (Der) GTPase family. Associates with the 50S ribosomal subunit.

Functionally, GTPase that plays an essential role in the late steps of ribosome biogenesis. This is GTPase Der from Chlamydia caviae (strain ATCC VR-813 / DSM 19441 / 03DC25 / GPIC) (Chlamydophila caviae).